The chain runs to 439 residues: Acyl transferase 4 (439 aa).

Residues His166 and Asp382 each act as proton acceptor in the active site.

It belongs to the plant acyltransferase family.

Grass-specific monolignol p-coumaroyl transferase involved in the biosynthesis of acylated monolignols or monolignol conjugates that serve as monomer precursors of lignin. Can synthesize sinapyl p-coumarate, p-coumaryl p-coumarate, sinapyl caffeate and p-coumaryl caffeate in vitro. This chain is Acyl transferase 4, found in Oryza sativa subsp. japonica (Rice).